Here is a 324-residue protein sequence, read N- to C-terminus: Zinc metalloproteinase leucurolysin-B (324 aa).

One can recognise a Peptidase M12B domain in the interval 1-119 (DTVLLNRISH…LNPQCILNEP (119 aa)). Asp11 is a binding site for Ca(2+). 3 disulfides stabilise this stretch: Cys34–Cys114, Cys74–Cys98, and Cys76–Cys81. A Zn(2+)-binding site is contributed by His59. Glu60 is an active-site residue. 2 residues coordinate Zn(2+): His63 and His69. The N-linked (GlcNAc...) asparagine glycan is linked to Asn97. Positions 114, 117, 129, 132, 134, 136, 139, and 142 each coordinate Ca(2+). In terms of domain architecture, Disintegrin spans 127–213 (PPVCGNELLE…QCPTDDFKRN (87 aa)). Cystine bridges form between Cys130/Cys159, Cys141/Cys154, Cys143/Cys149, Cys153/Cys176, Cys167/Cys173, Cys172/Cys198, Cys185/Cys205, Cys192/Cys224, Cys217/Cys229, Cys236/Cys286, Cys251/Cys295, Cys264/Cys274, and Cys281/Cys315. The D/ECD-tripeptide signature appears at 191-193 (ECD). Residues Asn296 and Asn305 are each glycosylated (N-linked (GlcNAc...) asparagine).

This sequence belongs to the venom metalloproteinase (M12B) family. P-III subfamily. P-IIIa sub-subfamily. In terms of assembly, monomer. Zn(2+) serves as cofactor. N-glycosylated. Post-translationally, the N-terminus is blocked. As to expression, expressed by the venom gland.

The protein resides in the secreted. Its activity is regulated as follows. Inhibited by EDTA, but not by PMSF. Pre-incubation with 2 mM DTT completely abolishes activity. Functionally, snake venom zinc metalloproteinase that acts as a potent hemorrhagic toxin. Hydrolyzes the insulin B chain at the 14-Ala-|-Leu-15 bond but not the 16-Tyr-|-Leu-17 bond. Degrades the alpha-chain of fibrin and hydrolyzes the Aalpha-chain of fibrinogen (FGA) while leaving the beta and gamma chains unaffected. Degrades type-I collagen and its gelatin. Degrades the alpha-1 chain of type-IV collagen and its gelatin but not the alpha-2 chain. Degrades plasma fibronectin, plasma vitronectin and basement membrane enactin. It inhibits collagen-induced platelet aggregation. The sequence is that of Zinc metalloproteinase leucurolysin-B from Bothrops leucurus (Whitetail lancehead).